We begin with the raw amino-acid sequence, 496 residues long: GTPase Der (496 aa).

EngA-type G domains lie at 3 to 166 (PVIA…VGKF) and 209 to 382 (VKLA…TCAT). GTP-binding positions include 9–16 (GRPNVGKS), 56–60 (DTGGI), 118–121 (NKTD), 215–222 (GRPNVGKS), 262–266 (DTAGV), and 327–330 (NKWD). The region spanning 383–467 (RRVGTSMLTR…PIRIQFKEGE (85 aa)) is the KH-like domain.

This sequence belongs to the TRAFAC class TrmE-Era-EngA-EngB-Septin-like GTPase superfamily. EngA (Der) GTPase family. As to quaternary structure, associates with the 50S ribosomal subunit.

Its function is as follows. GTPase that plays an essential role in the late steps of ribosome biogenesis. This chain is GTPase Der, found in Proteus mirabilis (strain HI4320).